Reading from the N-terminus, the 987-residue chain is UPF0182 protein DIP0733 (987 aa).

7 helical membrane passes run 19 to 39 (LTWLIPLLMILGALVPTVVDL), 63 to 83 (IGLFVGFGLLAGIVTFLAGWF), 115 to 135 (FLVVLPVVIGIAAGFLGQQAW), 176 to 196 (SVLLVVAFLIALVGHYLLGGI), 212 to 234 (YAKVQLAVTGGLYLLVRMASYWL), 261 to 281 (AKIVLLVISAVVAISFFSVIV), and 290 to 310 (ISTVLMIVSSLAIGNAWPIMM). The segment covering 904–927 (DLGEAKGLKPESQNRDKPEDKEGK) has biased composition (basic and acidic residues). Residues 904–950 (DLGEAKGLKPESQNRDKPEDKEGKAPSTPSAPASGSGTTGEAIGKIN) are disordered. The span at 928–943 (APSTPSAPASGSGTTG) shows a compositional bias: low complexity.

Belongs to the UPF0182 family.

It is found in the cell membrane. The protein is UPF0182 protein DIP0733 of Corynebacterium diphtheriae (strain ATCC 700971 / NCTC 13129 / Biotype gravis).